Reading from the N-terminus, the 144-residue chain is Bacilliredoxin SSP1311 (144 aa).

It belongs to the bacilliredoxin family.

This chain is Bacilliredoxin SSP1311, found in Staphylococcus saprophyticus subsp. saprophyticus (strain ATCC 15305 / DSM 20229 / NCIMB 8711 / NCTC 7292 / S-41).